Here is a 505-residue protein sequence, read N- to C-terminus: Cobyric acid synthase (505 aa).

The GATase cobBQ-type domain occupies 251–444 (DIDVAVIKLP…IHGIFDNSEF (194 aa)). C332 (nucleophile) is an active-site residue. Residue H436 is part of the active site.

Belongs to the CobB/CobQ family. CobQ subfamily.

It functions in the pathway cofactor biosynthesis; adenosylcobalamin biosynthesis. Functionally, catalyzes amidations at positions B, D, E, and G on adenosylcobyrinic A,C-diamide. NH(2) groups are provided by glutamine, and one molecule of ATP is hydrogenolyzed for each amidation. This is Cobyric acid synthase from Clostridium novyi (strain NT).